Here is a 445-residue protein sequence, read N- to C-terminus: GTPase Der (445 aa).

EngA-type G domains lie at 3–167 and 180–353; these read PVIA…YAGQ and VKIA…AAAM. GTP-binding positions include 9–16, 56–60, 119–122, 186–193, 233–237, and 298–301; these read GRPNVGKS, DTGGF, NKAE, DTAGL, and NKWD. A KH-like domain is found at 354–438; the sequence is AKLPTPKLTR…PLRIEFRSST (85 aa).

This sequence belongs to the TRAFAC class TrmE-Era-EngA-EngB-Septin-like GTPase superfamily. EngA (Der) GTPase family. As to quaternary structure, associates with the 50S ribosomal subunit.

Its function is as follows. GTPase that plays an essential role in the late steps of ribosome biogenesis. This Paraburkholderia phytofirmans (strain DSM 17436 / LMG 22146 / PsJN) (Burkholderia phytofirmans) protein is GTPase Der.